A 118-amino-acid polypeptide reads, in one-letter code: Small ribosomal subunit protein uS13 (118 aa).

The segment at 93–118 (RGLPVRGQRTKTNARTRKGPRKPIRK) is disordered.

Belongs to the universal ribosomal protein uS13 family. As to quaternary structure, part of the 30S ribosomal subunit. Forms a loose heterodimer with protein S19. Forms two bridges to the 50S subunit in the 70S ribosome.

Functionally, located at the top of the head of the 30S subunit, it contacts several helices of the 16S rRNA. In the 70S ribosome it contacts the 23S rRNA (bridge B1a) and protein L5 of the 50S subunit (bridge B1b), connecting the 2 subunits; these bridges are implicated in subunit movement. Contacts the tRNAs in the A and P-sites. This chain is Small ribosomal subunit protein uS13, found in Azotobacter vinelandii (strain DJ / ATCC BAA-1303).